Consider the following 389-residue polypeptide: Mesotocin receptor (389 aa).

Residues 1 to 50 lie on the Extracellular side of the membrane; it reads MEGLCLNLDCSELPNSSWVNSSMENQNHSSNSTRDPLKRNEEVAKVEVTV. N-linked (GlcNAc...) asparagine glycans are attached at residues Asn15, Asn20, Asn27, and Asn31. The chain crosses the membrane as a helical span at residues 51–71; sequence LALILFLALAGNICVLLGIYI. At 72-87 the chain is on the cytoplasmic side; that stretch reads NRHKHSRMYFFMKHLS. The helical transmembrane segment at 88–108 threads the bilayer; sequence IADLVVAIFQVLPQLIWDITF. At 109-119 the chain is on the extracellular side; sequence RFYAPDLVCRL. A disulfide bond links Cys117 and Cys192. The helical transmembrane segment at 120–140 threads the bilayer; sequence VTYLQVVGMFASTYMLLLMSL. Over 141 to 159 the chain is Cytoplasmic; that stretch reads DRCLAICQPLRSLHRRSDC. The chain crosses the membrane as a helical span at residues 160 to 180; it reads VYVLFTWILSFLLSTPQTVIF. Topologically, residues 181–207 are extracellular; the sequence is SLTEVGNGVYDCRADFIQPWGPKAYIT. A helical membrane pass occupies residues 208–228; that stretch reads WITLAVYIIPVMILSVCYGLI. The Cytoplasmic segment spans residues 229–275; the sequence is SYKIWQNIRLKTVCESNLRLSTSRRATLSRVSSVRLISKAKIRTVKM. The helical transmembrane segment at 276 to 296 threads the bilayer; sequence TFIIVLAYIVCWTPFFFVQMW. The Extracellular portion of the chain corresponds to 297–308; sequence SVWDPNPPKEAS. The helical transmembrane segment at 309 to 329 threads the bilayer; sequence LFIIAMLLGSLNSCCNPWIYM. The Cytoplasmic portion of the chain corresponds to 330 to 389; the sequence is LFTGHLFHDLLQSFLCCSARYLKTQQQGSDLSASRKSNSSTFVLSRKSSSQKSITQPSTA. Residues 360-389 form a disordered region; that stretch reads LSASRKSNSSTFVLSRKSSSQKSITQPSTA.

The protein belongs to the G-protein coupled receptor 1 family. Vasopressin/oxytocin receptor subfamily. As to expression, highly expressed in the bladder. Also expressed in kidney, brain and skeletal muscle.

It is found in the cell membrane. Functionally, binds to mesotocin and may play a role in the regulation of water and salt transport. The protein is Mesotocin receptor of Rhinella marina (Cane toad).